We begin with the raw amino-acid sequence, 222 residues long: N-(5'-phosphoribosyl)anthranilate isomerase (222 aa).

Belongs to the TrpF family.

It catalyses the reaction N-(5-phospho-beta-D-ribosyl)anthranilate = 1-(2-carboxyphenylamino)-1-deoxy-D-ribulose 5-phosphate. The protein operates within amino-acid biosynthesis; L-tryptophan biosynthesis; L-tryptophan from chorismate: step 3/5. The polypeptide is N-(5'-phosphoribosyl)anthranilate isomerase (Gloeobacter violaceus (strain ATCC 29082 / PCC 7421)).